The following is a 1383-amino-acid chain: PAS domain-containing serine/threonine-protein kinase (1383 aa).

At M1 the chain carries N-acetylmethionine. At S19 the chain carries Phosphoserine. The residue at position 31 (T31) is a Phosphothreonine. 2 PAS domains span residues 117–188 and 333–400; these read SGSL…VEAD and YQAS…SVQL. A Phosphoserine modification is found at S1000. Residues 1059–1311 form the Protein kinase domain; the sequence is YNTISPLGSG…LEKLIRDPWV (253 aa). ATP is bound by residues 1065–1073, K1088, and 1142–1149; these read LGSGAFGFV and EKHGSGMD. D1188 acts as the Proton acceptor in catalysis. Position 1206 (D1206) interacts with ATP. Phosphothreonine; by autocatalysis is present on residues T1221 and T1225. Positions 1344–1383 are disordered; it reads GSRSPSEMAQREGLCGPPAPRETRGDQHCLHLKDPSLPVS. Positions 1364-1377 are enriched in basic and acidic residues; it reads RETRGDQHCLHLKD.

The protein belongs to the protein kinase superfamily. CAMK Ser/Thr protein kinase family. Post-translationally, autophosphorylated on Thr-1221 and Thr-1225. Autophosphorylation is activated by phospholipids. As to expression, ubiquitously expressed. Strongly up-regulated in postmeiotic germ cells during spermatogenesis.

The protein localises to the cytoplasm. It localises to the nucleus. The catalysed reaction is L-seryl-[protein] + ATP = O-phospho-L-seryl-[protein] + ADP + H(+). It catalyses the reaction L-threonyl-[protein] + ATP = O-phospho-L-threonyl-[protein] + ADP + H(+). With respect to regulation, protein kinase activity is inhibited by the first PAS domain: binding of an unidentified ligand desinhibits the protein kinase activity. May be activated by autophosphorylation on Thr-1221 and Thr-1225. Autophosphorylation is enhanced upon phosphatidylinositol monophosphate (phosphatidylinositol 4-phosphate) binding and inhibited upon phosphatidylinositol bi- and tri-phosphate binding. In contrast, phosphorylation of target proteins is inhibited upon all phosphatidylinositol-binding (phosphatidylinositol mono- bi- and tri-phosphate). Functionally, serine/threonine-protein kinase involved in energy homeostasis and protein translation. Phosphorylates EEF1A1, GYS1, PDX1 and RPS6. Probably plays a role under changing environmental conditions (oxygen, glucose, nutrition), rather than under standard conditions. Acts as a sensor involved in energy homeostasis: regulates glycogen synthase synthesis by mediating phosphorylation of GYS1, leading to GYS1 inactivation. May be involved in glucose-stimulated insulin production in pancreas and regulation of glucagon secretion by glucose in alpha cells; however such data require additional evidences. May play a role in regulation of protein translation by phosphorylating EEF1A1, leading to increase translation efficiency. May also participate in respiratory regulation. This is PAS domain-containing serine/threonine-protein kinase (Pask) from Mus musculus (Mouse).